A 501-amino-acid polypeptide reads, in one-letter code: GMP synthase [glutamine-hydrolyzing] (501 aa).

Residues 1–185 (MVLVVDYGSQ…LFNVCKLEKN (185 aa)) form the Glutamine amidotransferase type-1 domain. C75 acts as the Nucleophile in catalysis. Catalysis depends on residues H159 and E161. The 191-residue stretch at 186 to 376 (WKIGDLVEEK…LGIPDRIINR (191 aa)) folds into the GMPS ATP-PPase domain. Residue 213–219 (SGGVDSS) coordinates ATP.

Homodimer.

It carries out the reaction XMP + L-glutamine + ATP + H2O = GMP + L-glutamate + AMP + diphosphate + 2 H(+). Its pathway is purine metabolism; GMP biosynthesis; GMP from XMP (L-Gln route): step 1/1. Its function is as follows. Catalyzes the synthesis of GMP from XMP. In Thermotoga petrophila (strain ATCC BAA-488 / DSM 13995 / JCM 10881 / RKU-1), this protein is GMP synthase [glutamine-hydrolyzing].